We begin with the raw amino-acid sequence, 341 residues long: Phenylalanine--tRNA ligase alpha subunit (341 aa).

Glutamate 254 lines the Mg(2+) pocket.

This sequence belongs to the class-II aminoacyl-tRNA synthetase family. Phe-tRNA synthetase alpha subunit type 1 subfamily. As to quaternary structure, tetramer of two alpha and two beta subunits. It depends on Mg(2+) as a cofactor.

It is found in the cytoplasm. The enzyme catalyses tRNA(Phe) + L-phenylalanine + ATP = L-phenylalanyl-tRNA(Phe) + AMP + diphosphate + H(+). The polypeptide is Phenylalanine--tRNA ligase alpha subunit (pheS) (Mycoplasma pneumoniae (strain ATCC 29342 / M129 / Subtype 1) (Mycoplasmoides pneumoniae)).